A 288-amino-acid polypeptide reads, in one-letter code: Probable sulfate transport system permease protein cysT (288 aa).

7 helical membrane-spanning segments follow: residues phenylalanine 28–leucine 48, phenylalanine 77–isoleucine 97, alanine 111–valine 131, isoleucine 149–valine 169, phenylalanine 198–phenylalanine 218, serine 227–phenylalanine 247, and isoleucine 261–leucine 281. Positions tyrosine 73 to isoleucine 276 constitute an ABC transmembrane type-1 domain.

Belongs to the binding-protein-dependent transport system permease family. CysTW subfamily.

The protein localises to the plastid. It localises to the chloroplast membrane. In terms of biological role, part of the ABC transporter complex cysAWTP (TC 3.A.1.6.1) involved in sulfate/thiosulfate import. Probably responsible for the translocation of the substrate across the membrane. This Zygnema circumcarinatum (Green alga) protein is Probable sulfate transport system permease protein cysT (cysT).